Consider the following 88-residue polypeptide: Small ribosomal subunit protein uS17 (88 aa).

This sequence belongs to the universal ribosomal protein uS17 family. As to quaternary structure, part of the 30S ribosomal subunit.

One of the primary rRNA binding proteins, it binds specifically to the 5'-end of 16S ribosomal RNA. In Oleidesulfovibrio alaskensis (strain ATCC BAA-1058 / DSM 17464 / G20) (Desulfovibrio alaskensis), this protein is Small ribosomal subunit protein uS17.